The chain runs to 94 residues: MNIKPLGERVVIKKLEAEEKTKSGIVLTGTAKERPQEAEVVAVGPGAVVDGNRVAMEVKVGDKVLYSKYAGTEVKVDGEEYTILKQDDILAIVE.

The protein belongs to the GroES chaperonin family. Heptamer of 7 subunits arranged in a ring. Interacts with the chaperonin GroEL.

The protein resides in the cytoplasm. Functionally, together with the chaperonin GroEL, plays an essential role in assisting protein folding. The GroEL-GroES system forms a nano-cage that allows encapsulation of the non-native substrate proteins and provides a physical environment optimized to promote and accelerate protein folding. GroES binds to the apical surface of the GroEL ring, thereby capping the opening of the GroEL channel. This Clostridium beijerinckii (strain ATCC 51743 / NCIMB 8052) (Clostridium acetobutylicum) protein is Co-chaperonin GroES.